Reading from the N-terminus, the 375-residue chain is 23S rRNA (uracil(747)-C(5))-methyltransferase RlmC (375 aa).

[4Fe-4S] cluster is bound by residues cysteine 3, cysteine 11, cysteine 14, and cysteine 87. Glutamine 212, phenylalanine 241, glutamate 262, and asparagine 307 together coordinate S-adenosyl-L-methionine. Cysteine 334 serves as the catalytic Nucleophile.

The protein belongs to the class I-like SAM-binding methyltransferase superfamily. RNA M5U methyltransferase family. RlmC subfamily.

It carries out the reaction uridine(747) in 23S rRNA + S-adenosyl-L-methionine = 5-methyluridine(747) in 23S rRNA + S-adenosyl-L-homocysteine + H(+). Its function is as follows. Catalyzes the formation of 5-methyl-uridine at position 747 (m5U747) in 23S rRNA. The sequence is that of 23S rRNA (uracil(747)-C(5))-methyltransferase RlmC from Shigella boydii serotype 4 (strain Sb227).